The following is a 200-amino-acid chain: ATP-dependent Clp protease proteolytic subunit (200 aa).

The active-site Nucleophile is Ser102. Residue His127 is part of the active site.

The protein belongs to the peptidase S14 family. Fourteen ClpP subunits assemble into 2 heptameric rings which stack back to back to give a disk-like structure with a central cavity, resembling the structure of eukaryotic proteasomes.

Its subcellular location is the cytoplasm. The catalysed reaction is Hydrolysis of proteins to small peptides in the presence of ATP and magnesium. alpha-casein is the usual test substrate. In the absence of ATP, only oligopeptides shorter than five residues are hydrolyzed (such as succinyl-Leu-Tyr-|-NHMec, and Leu-Tyr-Leu-|-Tyr-Trp, in which cleavage of the -Tyr-|-Leu- and -Tyr-|-Trp bonds also occurs).. Functionally, cleaves peptides in various proteins in a process that requires ATP hydrolysis. Has a chymotrypsin-like activity. Plays a major role in the degradation of misfolded proteins. This chain is ATP-dependent Clp protease proteolytic subunit, found in Dehalococcoides mccartyi (strain ATCC BAA-2266 / KCTC 15142 / 195) (Dehalococcoides ethenogenes (strain 195)).